A 201-amino-acid chain; its full sequence is Small ribosomal subunit protein uS4 (201 aa).

The region spanning 92–155 is the S4 RNA-binding domain; sequence RRLDAVVYAL…QKLDIIQESV (64 aa).

It belongs to the universal ribosomal protein uS4 family. As to quaternary structure, part of the 30S ribosomal subunit. Contacts protein S5. The interaction surface between S4 and S5 is involved in control of translational fidelity.

Functionally, one of the primary rRNA binding proteins, it binds directly to 16S rRNA where it nucleates assembly of the body of the 30S subunit. In terms of biological role, with S5 and S12 plays an important role in translational accuracy. This is Small ribosomal subunit protein uS4 from Staphylococcus carnosus (strain TM300).